The primary structure comprises 562 residues: Membrane protein insertase YidC (562 aa).

Residues 1-21 traverse the membrane as a helical segment; that stretch reads MDIKRTILIVALAIVTYVGVL. Residues 42-74 form a disordered region; it reads TAPGIPDTAAGNNGSASADVPSATGNTTSAAPL. 5 helical membrane-spanning segments follow: residues 343 to 363, 369 to 389, 439 to 459, 470 to 490, and 517 to 537; these read LELT…FWLL, ILGN…GLFF, LGGC…YWVL, WILW…PIIM, and PIIF…YWVV.

Belongs to the OXA1/ALB3/YidC family. Type 1 subfamily. As to quaternary structure, interacts with the Sec translocase complex via SecD. Specifically interacts with transmembrane segments of nascent integral membrane proteins during membrane integration.

The protein localises to the cell inner membrane. In terms of biological role, required for the insertion and/or proper folding and/or complex formation of integral membrane proteins into the membrane. Involved in integration of membrane proteins that insert both dependently and independently of the Sec translocase complex, as well as at least some lipoproteins. Aids folding of multispanning membrane proteins. In Pseudomonas syringae pv. tomato (strain ATCC BAA-871 / DC3000), this protein is Membrane protein insertase YidC.